Here is an 87-residue protein sequence, read N- to C-terminus: Phosphoribosyl-ATP pyrophosphatase (87 aa).

Belongs to the PRA-PH family.

It is found in the cytoplasm. The catalysed reaction is 1-(5-phospho-beta-D-ribosyl)-ATP + H2O = 1-(5-phospho-beta-D-ribosyl)-5'-AMP + diphosphate + H(+). It functions in the pathway amino-acid biosynthesis; L-histidine biosynthesis; L-histidine from 5-phospho-alpha-D-ribose 1-diphosphate: step 2/9. The polypeptide is Phosphoribosyl-ATP pyrophosphatase (Bifidobacterium animalis subsp. lactis (strain AD011)).